An 811-amino-acid chain; its full sequence is tRNA(Met) cytidine acetyltransferase TmcA (811 aa).

ATP-binding residues include Gln-267 and Arg-439. The region spanning 473-662 (KKEVYLEEPD…GEFTAIVLKP (190 aa)) is the N-acetyltransferase domain. Acetyl-CoA is bound by residues 589–591 (IAT), Glu-629, and Arg-636.

The protein belongs to the TmcA family.

The protein resides in the cytoplasm. The enzyme catalyses cytidine(34) in elongator tRNA(Met) + acetyl-CoA + ATP + H2O = N(4)-acetylcytidine(34) in elongator tRNA(Met) + ADP + phosphate + CoA + H(+). The catalysed reaction is a cytidine in RNA + acetyl-CoA + ATP + H2O = an N(4)-acetylcytidine in RNA + ADP + phosphate + CoA + H(+). It carries out the reaction a cytidine in tRNA + acetyl-CoA + ATP + H2O = an N(4)-acetylcytidine in tRNA + ADP + phosphate + CoA + H(+). It catalyses the reaction a cytidine in mRNA + acetyl-CoA + ATP + H2O = an N(4)-acetylcytidine in mRNA + ADP + phosphate + CoA + H(+). Functionally, catalyzes the formation of N(4)-acetylcytidine (ac(4)C) at the wobble position of tRNA(Met), by using acetyl-CoA as an acetyl donor and ATP (or GTP). Its function is as follows. Catalyzes the formation of 267 N(4)-acetylcytidine (ac(4)C) sites in RNA, almost always on the middle C of a CCG motif. Modifications are found in rRNA, ncRNA, mRNA and tRNA. More acetylation is observed at 95 than at 75 or 85 degrees Celsius. This Thermococcus sp. (strain AM4) protein is tRNA(Met) cytidine acetyltransferase TmcA.